The primary structure comprises 193 residues: MSAVATYLKTLTARRTIYALKPELPGEITINDIQSVVQTIIKETPTAFNSQPNRAVILTGETHKKVWDEVTKAIESPAGQKRPASARDEAFGSVIFFTDDKVTEKLKADFPAYAAAFPSFADHTSGAAQINSWVALEAMGLGGHLQHYNGYIKAALPSKIPESWTVQAQLVFGTPAAPPGEKTYIKNDVEIFN.

Position 2 is an N-acetylserine (serine 2).

The protein belongs to the nitroreductase family. Requires FMN as cofactor.

The protein resides in the cytoplasm. It is found in the nucleus. The chain is Putative nitroreductase HBN1 (HBN1) from Saccharomyces cerevisiae (strain ATCC 204508 / S288c) (Baker's yeast).